The sequence spans 466 residues: Chromosomal replication initiator protein DnaA (466 aa).

The tract at residues 1 to 86 is domain I, interacts with DnaA modulators; it reads MSLSLWQQCL…EVGTKPVTQT (86 aa). Residues 86–129 form a domain II region; the sequence is TLKTPVHNVVAPTQTTTAQPQRVAPAARSGWDNVPAPAEPTYRS. The segment at 130-346 is domain III, AAA+ region; the sequence is NVNVKHTFDN…GALNRVIANA (217 aa). ATP contacts are provided by Gly-174, Gly-176, Lys-177, and Thr-178. Residues 347-466 are domain IV, binds dsDNA; that stretch reads NFTGRAITID…FSNLIRTLSS (120 aa).

It belongs to the DnaA family. In terms of assembly, oligomerizes as a right-handed, spiral filament on DNA at oriC.

The protein resides in the cytoplasm. Plays an essential role in the initiation and regulation of chromosomal replication. ATP-DnaA binds to the origin of replication (oriC) to initiate formation of the DNA replication initiation complex once per cell cycle. Binds the DnaA box (a 9 base pair repeat at the origin) and separates the double-stranded (ds)DNA. Forms a right-handed helical filament on oriC DNA; dsDNA binds to the exterior of the filament while single-stranded (ss)DNA is stabiized in the filament's interior. The ATP-DnaA-oriC complex binds and stabilizes one strand of the AT-rich DNA unwinding element (DUE), permitting loading of DNA polymerase. After initiation quickly degrades to an ADP-DnaA complex that is not apt for DNA replication. Binds acidic phospholipids. The chain is Chromosomal replication initiator protein DnaA from Salmonella enteritidis PT4 (strain P125109).